The sequence spans 459 residues: Hepatocyte nuclear factor 3-beta (459 aa).

The tract at residues 14 to 93 is transactivation domain 1; that stretch reads DWSSYYAEPE…AGAMAGMSGS (80 aa). The Nuclear localization signal motif lies at 106–113; sequence LSPSLSPL. Thr-156 carries the phosphothreonine modification. The fork-head DNA-binding region spans 159–252; it reads KPPYSYISLI…FENGCYLRRQ (94 aa). Ser-212 carries the phosphoserine modification. The segment covering 268–281 has biased composition (low complexity); the sequence is GAASSGGKKTAPGS. Residues 268–366 form a disordered region; the sequence is GAASSGGKKT…PGLPPEAHLK (99 aa). Ser-284 carries the post-translational modification Phosphoserine. A compositionally biased stretch (polar residues) spans 295–311; the sequence is ASETPAGTESPHSSASP. The residue at position 302 (Thr-302) is a Phosphothreonine. A phosphoserine mark is found at Ser-304, Ser-307, Ser-308, and Ser-310. Positions 340 to 353 are enriched in low complexity; it reads PGQQQQAAAHLLGP. Residues 362-459 are transactivation domain 2; that stretch reads EAHLKPEHHY…VYSRPIMNSS (98 aa). Phosphoserine occurs at positions 438 and 459.

Binds DNA as a monomer. Binds TLE1. Interacts with FOXA1 and FOXA3. Interacts with PRKDC. Interacts with AKT1. Interacts with TET1; this interaction may recruit TET1 to specific genomic loci to mediate their demethylation. In terms of processing, phosphorylation on Thr-156 abolishes binding to target promoters and subsequent transcription activation upon insulin stimulation. Restricted mainly to endoderm-derived tissues (lung, liver, stomach, and small intestine). Expressed in epididymis with region-specific expression pattern: no expression is observed in initial segment, low expression in proximal caput, gradiently higher levels of expression in middle and distal caput and highest level in corpus and cauda (at protein level).

It is found in the nucleus. It localises to the cytoplasm. Transcription factor that is involved in embryonic development, establishment of tissue-specific gene expression and regulation of gene expression in differentiated tissues. Is thought to act as a 'pioneer' factor opening the compacted chromatin for other proteins through interactions with nucleosomal core histones and thereby replacing linker histones at target enhancer and/or promoter sites. Binds DNA with the consensus sequence 5'-[AC]A[AT]T[AG]TT[GT][AG][CT]T[CT]-3'. In embryonic development is required for notochord formation. Involved in the development of multiple endoderm-derived organ systems such as the liver, pancreas and lungs; Foxa1 and Foxa2 seem to have at least in part redundant roles. FOXA1 and FOXA2 are essential for hepatic specification. FOXA1 and FOXA2 are required for morphogenesis and cell differentiation during formation of the lung. FOXA1 and FOXA2 are involved in bile duct formation; they positively regulate the binding glucocorticoid receptor/NR3C1 to the IL6 promoter. FOXA1 and FOXA2 regulate multiple phases of midbrain dopaminergic neuron development; they regulate expression of NEUROG2 at the beginning of mDA neurogenesis and of NR4A2 and EN1 in immature mDA neurons. Modulates the transcriptional activity of nuclear hormone receptors; inhibits AR-mediated transcription from the LCN5 promoter. Binds to fibrinogen beta promoter and is involved in IL6-induced fibrinogen beta transcriptional activation. Originally described as a transcription activator for a number of liver genes such as AFP, albumin, tyrosine aminotransferase, PEPCK, etc. Interacts with the cis-acting regulatory regions of these genes. Involved in glucose homeostasis; regulates the expression of genes important for glucose sensing in pancreatic beta-cells and glucose homeostasis. In pancreatic beta cells activates transcription of potassium channel subunits KCNJ11 and ABCC8. Involved in regulation of fat metabolism; activates transcriptional programs of lipid metabolism and ketogenesis at low insulin state. Involved in transcriptional regulation of MUC2 in the intestine. The protein is Hepatocyte nuclear factor 3-beta (Foxa2) of Mus musculus (Mouse).